The primary structure comprises 189 residues: Peptidyl-tRNA hydrolase (189 aa).

Tyr15 serves as a coordination point for tRNA. Catalysis depends on His20, which acts as the Proton acceptor. The tRNA site is built by Phe66, Asn68, and Asn114.

It belongs to the PTH family. Monomer.

It is found in the cytoplasm. It catalyses the reaction an N-acyl-L-alpha-aminoacyl-tRNA + H2O = an N-acyl-L-amino acid + a tRNA + H(+). In terms of biological role, hydrolyzes ribosome-free peptidyl-tRNAs (with 1 or more amino acids incorporated), which drop off the ribosome during protein synthesis, or as a result of ribosome stalling. Functionally, catalyzes the release of premature peptidyl moieties from peptidyl-tRNA molecules trapped in stalled 50S ribosomal subunits, and thus maintains levels of free tRNAs and 50S ribosomes. The polypeptide is Peptidyl-tRNA hydrolase (Streptococcus pyogenes serotype M3 (strain ATCC BAA-595 / MGAS315)).